Consider the following 283-residue polypeptide: Phosphatidylglycerol--prolipoprotein diacylglyceryl transferase (283 aa).

The next 7 membrane-spanning stretches (helical) occupy residues 21–41, 60–80, 95–115, 124–144, 176–196, 203–223, and 239–259; these read LAVR…LWLA, LLFA…VLFY, VWTG…AMLW, FFTI…AGRL, SQLY…NWFI, GAVS…VEYV, and MGQI…LWAF. An a 1,2-diacyl-sn-glycero-3-phospho-(1'-sn-glycerol)-binding site is contributed by Arg143.

Belongs to the Lgt family.

The protein resides in the cell inner membrane. The enzyme catalyses L-cysteinyl-[prolipoprotein] + a 1,2-diacyl-sn-glycero-3-phospho-(1'-sn-glycerol) = an S-1,2-diacyl-sn-glyceryl-L-cysteinyl-[prolipoprotein] + sn-glycerol 1-phosphate + H(+). It participates in protein modification; lipoprotein biosynthesis (diacylglyceryl transfer). Functionally, catalyzes the transfer of the diacylglyceryl group from phosphatidylglycerol to the sulfhydryl group of the N-terminal cysteine of a prolipoprotein, the first step in the formation of mature lipoproteins. The protein is Phosphatidylglycerol--prolipoprotein diacylglyceryl transferase of Aliivibrio fischeri (strain MJ11) (Vibrio fischeri).